The primary structure comprises 276 residues: uncharacterized protein (276 aa).

The AB hydrolase-1 domain maps to 20 to 137 (PVLIFIPGAN…PPINTFLPDS (118 aa)). The tract at residues 57–76 (GESELTEPLPDSASNPDSDY) is disordered.

The protein belongs to the AB hydrolase superfamily.

This is an uncharacterized protein from Staphylococcus aureus (strain bovine RF122 / ET3-1).